Reading from the N-terminus, the 409-residue chain is Lysosome-associated membrane glycoprotein 1 (409 aa).

The signal sequence occupies residues 1–25; sequence MAAPGGARRRPLLLLLFAGLVHGAS. Residues 26–187 are first lumenal domain; sequence AVFVVKNGNG…SNFSREETRC (162 aa). The Lumenal portion of the chain corresponds to 26–374; that stretch reads AVFVVKNGNG…EECQLDENSM (349 aa). N-linked (GlcNAc...) asparagine glycans are attached at residues Asn34, Asn59, Asn72, Asn80, Asn103, Asn117, Asn126, Asn146, Asn161, and Asn179. A disulfide bridge connects residues Cys38 and Cys76. Cys151 and Cys187 are disulfide-bonded. The tract at residues 180–207 is disordered; the sequence is FSREETRCEQDLPTPTTPPQPAPTPAPA. A hinge region spans residues 188 to 219; sequence EQDLPTPTTPPQPAPTPAPASPAVFRYNVSGS. The span at 194–207 shows a compositional bias: pro residues; the sequence is PTTPPQPAPTPAPA. 8 N-linked (GlcNAc...) asparagine glycosylation sites follow: Asn215, Asn220, Asn241, Asn253, Asn260, Asn285, Asn299, and Asn314. Residues 220-374 form a second lumenal domain region; the sequence is NGTCLLASMG…EECQLDENSM (155 aa). Cys223 and Cys261 are oxidised to a cystine. An intrachain disulfide couples Cys330 to Cys367. A helical transmembrane segment spans residues 375–398; that stretch reads LIPIAVGGALAGLVLIVLLAYLIG. Topologically, residues 399–409 are cytoplasmic; it reads RKRSHAGYQTI.

Belongs to the LAMP family. Interacts with ABCB9; this interaction strongly stabilizes ABCB9 and protects ABCB9 against lysosomal degradation. Interacts with FURIN. Interacts with TMEM175; inhibiting the proton channel activity of TMEM175. In terms of processing, O- and N-glycosylated; some of the N-glycans attached to LAMP-1 are polylactosaminoglycans.

The protein resides in the lysosome membrane. It is found in the endosome membrane. The protein localises to the late endosome membrane. Its subcellular location is the cell membrane. It localises to the cytolytic granule membrane. In terms of biological role, lysosomal membrane glycoprotein which plays an important role in lysosome biogenesis, lysosomal pH regulation, autophagy and cholesterol homeostasis. Acts as an important regulator of lysosomal lumen pH regulation by acting as a direct inhibitor of the proton channel TMEM175, facilitating lysosomal acidification for optimal hydrolase activity. Also plays an important role in NK-cells cytotoxicity. Mechanistically, participates in cytotoxic granule movement to the cell surface and perforin trafficking to the lytic granule. In addition, protects NK-cells from degranulation-associated damage induced by their own cytotoxic granule content. Presents carbohydrate ligands to selectins. This is Lysosome-associated membrane glycoprotein 1 (LAMP1) from Bos taurus (Bovine).